The primary structure comprises 316 residues: 4-hydroxy-3-methylbut-2-enyl diphosphate reductase (316 aa).

Cys-12 is a [4Fe-4S] cluster binding site. Positions 41 and 74 each coordinate (2E)-4-hydroxy-3-methylbut-2-enyl diphosphate. Dimethylallyl diphosphate is bound by residues His-41 and His-74. Isopentenyl diphosphate is bound by residues His-41 and His-74. Position 96 (Cys-96) interacts with [4Fe-4S] cluster. His-124 is a (2E)-4-hydroxy-3-methylbut-2-enyl diphosphate binding site. His-124 contacts dimethylallyl diphosphate. His-124 contacts isopentenyl diphosphate. The active-site Proton donor is the Glu-126. Thr-169 lines the (2E)-4-hydroxy-3-methylbut-2-enyl diphosphate pocket. [4Fe-4S] cluster is bound at residue Cys-199. (2E)-4-hydroxy-3-methylbut-2-enyl diphosphate contacts are provided by Ser-227, Ser-228, Asn-229, and Ser-271. Positions 227, 228, 229, and 271 each coordinate dimethylallyl diphosphate. The isopentenyl diphosphate site is built by Ser-227, Ser-228, Asn-229, and Ser-271.

This sequence belongs to the IspH family. Requires [4Fe-4S] cluster as cofactor.

The enzyme catalyses isopentenyl diphosphate + 2 oxidized [2Fe-2S]-[ferredoxin] + H2O = (2E)-4-hydroxy-3-methylbut-2-enyl diphosphate + 2 reduced [2Fe-2S]-[ferredoxin] + 2 H(+). It catalyses the reaction dimethylallyl diphosphate + 2 oxidized [2Fe-2S]-[ferredoxin] + H2O = (2E)-4-hydroxy-3-methylbut-2-enyl diphosphate + 2 reduced [2Fe-2S]-[ferredoxin] + 2 H(+). Its pathway is isoprenoid biosynthesis; dimethylallyl diphosphate biosynthesis; dimethylallyl diphosphate from (2E)-4-hydroxy-3-methylbutenyl diphosphate: step 1/1. The protein operates within isoprenoid biosynthesis; isopentenyl diphosphate biosynthesis via DXP pathway; isopentenyl diphosphate from 1-deoxy-D-xylulose 5-phosphate: step 6/6. In terms of biological role, catalyzes the conversion of 1-hydroxy-2-methyl-2-(E)-butenyl 4-diphosphate (HMBPP) into a mixture of isopentenyl diphosphate (IPP) and dimethylallyl diphosphate (DMAPP). Acts in the terminal step of the DOXP/MEP pathway for isoprenoid precursor biosynthesis. The polypeptide is 4-hydroxy-3-methylbut-2-enyl diphosphate reductase (Xanthomonas oryzae pv. oryzae (strain MAFF 311018)).